The sequence spans 374 residues: Carbamoyl phosphate synthase small chain (374 aa).

A CPSase region spans residues 1-186 (MTEPAILVLE…DRNEWKRAAP (186 aa)). L-glutamine-binding residues include S47, G237, and G239. One can recognise a Glutamine amidotransferase type-1 domain in the interval 189–374 (KVVAYDYGVK…RFITMMAAQS (186 aa)). C265 serves as the catalytic Nucleophile. L-glutamine-binding residues include L266, Q269, N307, G309, and F310. Active-site residues include H349 and E351.

Belongs to the CarA family. In terms of assembly, composed of two chains; the small (or glutamine) chain promotes the hydrolysis of glutamine to ammonia, which is used by the large (or ammonia) chain to synthesize carbamoyl phosphate. Tetramer of heterodimers (alpha,beta)4.

The catalysed reaction is hydrogencarbonate + L-glutamine + 2 ATP + H2O = carbamoyl phosphate + L-glutamate + 2 ADP + phosphate + 2 H(+). It carries out the reaction L-glutamine + H2O = L-glutamate + NH4(+). The protein operates within amino-acid biosynthesis; L-arginine biosynthesis; carbamoyl phosphate from bicarbonate: step 1/1. It functions in the pathway pyrimidine metabolism; UMP biosynthesis via de novo pathway; (S)-dihydroorotate from bicarbonate: step 1/3. Functionally, small subunit of the glutamine-dependent carbamoyl phosphate synthetase (CPSase). CPSase catalyzes the formation of carbamoyl phosphate from the ammonia moiety of glutamine, carbonate, and phosphate donated by ATP, constituting the first step of 2 biosynthetic pathways, one leading to arginine and/or urea and the other to pyrimidine nucleotides. The small subunit (glutamine amidotransferase) binds and cleaves glutamine to supply the large subunit with the substrate ammonia. This chain is Carbamoyl phosphate synthase small chain, found in Xylella fastidiosa (strain 9a5c).